The chain runs to 314 residues: Small ribosomal subunit biogenesis GTPase RsgA (314 aa).

The interval 1–21 is disordered; it reads MKRAPTKQPAKPAARGGERAQ. Positions 85-246 constitute a CP-type G domain; it reads SDQFKSKLFA…LIDSPGFQEF (162 aa). GTP-binding positions include 134–137 and 188–196; these read NKID and GQSGMGKST. The Zn(2+) site is built by C270, C275, H277, and C283.

This sequence belongs to the TRAFAC class YlqF/YawG GTPase family. RsgA subfamily. In terms of assembly, monomer. Associates with 30S ribosomal subunit, binds 16S rRNA. Requires Zn(2+) as cofactor.

Its subcellular location is the cytoplasm. One of several proteins that assist in the late maturation steps of the functional core of the 30S ribosomal subunit. Helps release RbfA from mature subunits. May play a role in the assembly of ribosomal proteins into the subunit. Circularly permuted GTPase that catalyzes slow GTP hydrolysis, GTPase activity is stimulated by the 30S ribosomal subunit. The chain is Small ribosomal subunit biogenesis GTPase RsgA from Burkholderia pseudomallei (strain 1106a).